The chain runs to 894 residues: Desmocollin-1 (894 aa).

An N-terminal signal peptide occupies residues Met-1–Ala-29. Residues Cys-30–Arg-134 constitute a propeptide that is removed on maturation. Cadherin domains are found at residues Arg-135 to Phe-242, Glu-243 to Phe-354, Thr-355 to Cys-471, His-472 to Pro-575, and Gln-576 to Asp-682. Residues Arg-135–Arg-691 lie on the Extracellular side of the membrane. The N-linked (GlcNAc...) asparagine glycan is linked to Asn-165. Residue Thr-385 is modified to Phosphothreonine. Asn-546 carries N-linked (GlcNAc...) asparagine glycosylation. The chain crosses the membrane as a helical span at residues Trp-692–Val-714. Over Thr-715–Lys-894 the chain is Cytoplasmic.

Binds to JUP/plakoglobin. In terms of tissue distribution, strongly expressed in epidermis, less in lymph node and tongue.

The protein resides in the cell membrane. The protein localises to the cell junction. Its subcellular location is the desmosome. In terms of biological role, a component of desmosome cell-cell junctions which are required for positive regulation of cellular adhesion. Required for desmosome adhesion strength between the granular layers of the epidermis, as a result moderates epidermal proliferation and differentiation. Is therefore required to maintain postnatal epidermal barrier function and normal hair follicle morphology into adulthood. In Homo sapiens (Human), this protein is Desmocollin-1 (DSC1).